The primary structure comprises 245 residues: Adenosylcobinamide-GDP ribazoletransferase (245 aa).

5 consecutive transmembrane segments (helical) span residues 31–51 (FGRAVLCYPLVGVLIGVVLYG), 61–81 (PLLQAALLLSLWVALSGALHL), 113–133 (AAVVALVLVLLLKFGALAALL), 138–158 (PGLLLLAPWLARSSLPLLFLT), and 192–212 (LAFGLSGLLALLVTLMLFAWL).

The protein belongs to the CobS family. Mg(2+) is required as a cofactor.

Its subcellular location is the cell inner membrane. The catalysed reaction is alpha-ribazole + adenosylcob(III)inamide-GDP = adenosylcob(III)alamin + GMP + H(+). It catalyses the reaction alpha-ribazole 5'-phosphate + adenosylcob(III)inamide-GDP = adenosylcob(III)alamin 5'-phosphate + GMP + H(+). It functions in the pathway cofactor biosynthesis; adenosylcobalamin biosynthesis; adenosylcobalamin from cob(II)yrinate a,c-diamide: step 7/7. Joins adenosylcobinamide-GDP and alpha-ribazole to generate adenosylcobalamin (Ado-cobalamin). Also synthesizes adenosylcobalamin 5'-phosphate from adenosylcobinamide-GDP and alpha-ribazole 5'-phosphate. The protein is Adenosylcobinamide-GDP ribazoletransferase of Pseudomonas paraeruginosa (strain DSM 24068 / PA7) (Pseudomonas aeruginosa (strain PA7)).